The primary structure comprises 452 residues: Bifunctional protein GlmU (452 aa).

The segment at 1-226 is pyrophosphorylase; the sequence is MSLTTVILAA…PMEVEGANNR (226 aa). UDP-N-acetyl-alpha-D-glucosamine-binding positions include 8 to 11, K22, Q73, 78 to 79, 100 to 102, G137, E151, N166, and N224; these read LAAG, GT, and YGD. D102 is a Mg(2+) binding site. N224 contributes to the Mg(2+) binding site. Positions 227–247 are linker; sequence IQLAGLERAYQAWQAQELMLN. An N-acetyltransferase region spans residues 248-452; it reads GATLADPARI…LDGWKRPVKK (205 aa). R330 and K348 together coordinate UDP-N-acetyl-alpha-D-glucosamine. Residue H360 is the Proton acceptor of the active site. Y363 and N374 together coordinate UDP-N-acetyl-alpha-D-glucosamine. Residues A377, 383 to 384, S402, A420, and R437 each bind acetyl-CoA; that span reads NY.

This sequence in the N-terminal section; belongs to the N-acetylglucosamine-1-phosphate uridyltransferase family. In the C-terminal section; belongs to the transferase hexapeptide repeat family. As to quaternary structure, homotrimer. Mg(2+) serves as cofactor.

Its subcellular location is the cytoplasm. The catalysed reaction is alpha-D-glucosamine 1-phosphate + acetyl-CoA = N-acetyl-alpha-D-glucosamine 1-phosphate + CoA + H(+). The enzyme catalyses N-acetyl-alpha-D-glucosamine 1-phosphate + UTP + H(+) = UDP-N-acetyl-alpha-D-glucosamine + diphosphate. It participates in nucleotide-sugar biosynthesis; UDP-N-acetyl-alpha-D-glucosamine biosynthesis; N-acetyl-alpha-D-glucosamine 1-phosphate from alpha-D-glucosamine 6-phosphate (route II): step 2/2. The protein operates within nucleotide-sugar biosynthesis; UDP-N-acetyl-alpha-D-glucosamine biosynthesis; UDP-N-acetyl-alpha-D-glucosamine from N-acetyl-alpha-D-glucosamine 1-phosphate: step 1/1. Its pathway is bacterial outer membrane biogenesis; LPS lipid A biosynthesis. Catalyzes the last two sequential reactions in the de novo biosynthetic pathway for UDP-N-acetylglucosamine (UDP-GlcNAc). The C-terminal domain catalyzes the transfer of acetyl group from acetyl coenzyme A to glucosamine-1-phosphate (GlcN-1-P) to produce N-acetylglucosamine-1-phosphate (GlcNAc-1-P), which is converted into UDP-GlcNAc by the transfer of uridine 5-monophosphate (from uridine 5-triphosphate), a reaction catalyzed by the N-terminal domain. The protein is Bifunctional protein GlmU of Pseudoalteromonas translucida (strain TAC 125).